Consider the following 407-residue polypeptide: Argininosuccinate synthase (407 aa).

ATP contacts are provided by residues 10–18 and Ala37; that span reads AYSGGLDTS. Residues Tyr88 and Ser93 each contribute to the L-citrulline site. Gly118 provides a ligand contact to ATP. Thr120, Asn124, and Asp125 together coordinate L-aspartate. Asn124 is an L-citrulline binding site. The L-citrulline site is built by Arg128, Ser179, Ser188, Glu264, and Tyr276.

This sequence belongs to the argininosuccinate synthase family. Type 1 subfamily. Homotetramer.

The protein localises to the cytoplasm. It carries out the reaction L-citrulline + L-aspartate + ATP = 2-(N(omega)-L-arginino)succinate + AMP + diphosphate + H(+). Its pathway is amino-acid biosynthesis; L-arginine biosynthesis; L-arginine from L-ornithine and carbamoyl phosphate: step 2/3. The protein is Argininosuccinate synthase of Jannaschia sp. (strain CCS1).